The primary structure comprises 306 residues: Aspartate carbamoyltransferase catalytic subunit (306 aa).

Positions 54 and 55 each coordinate carbamoyl phosphate. K83 contributes to the L-aspartate binding site. The carbamoyl phosphate site is built by R104, H132, and Q135. Positions 165 and 227 each coordinate L-aspartate. Carbamoyl phosphate-binding residues include L266 and P267.

This sequence belongs to the aspartate/ornithine carbamoyltransferase superfamily. ATCase family. Heterododecamer (2C3:3R2) of six catalytic PyrB chains organized as two trimers (C3), and six regulatory PyrI chains organized as three dimers (R2).

It catalyses the reaction carbamoyl phosphate + L-aspartate = N-carbamoyl-L-aspartate + phosphate + H(+). It functions in the pathway pyrimidine metabolism; UMP biosynthesis via de novo pathway; (S)-dihydroorotate from bicarbonate: step 2/3. Catalyzes the condensation of carbamoyl phosphate and aspartate to form carbamoyl aspartate and inorganic phosphate, the committed step in the de novo pyrimidine nucleotide biosynthesis pathway. This Finegoldia magna (strain ATCC 29328 / DSM 20472 / WAL 2508) (Peptostreptococcus magnus) protein is Aspartate carbamoyltransferase catalytic subunit.